The chain runs to 158 residues: NAD(P)H-quinone oxidoreductase subunit J, chloroplastic (158 aa).

Belongs to the complex I 30 kDa subunit family. As to quaternary structure, NDH is composed of at least 16 different subunits, 5 of which are encoded in the nucleus.

It is found in the plastid. It localises to the chloroplast thylakoid membrane. The enzyme catalyses a plastoquinone + NADH + (n+1) H(+)(in) = a plastoquinol + NAD(+) + n H(+)(out). It catalyses the reaction a plastoquinone + NADPH + (n+1) H(+)(in) = a plastoquinol + NADP(+) + n H(+)(out). In terms of biological role, NDH shuttles electrons from NAD(P)H:plastoquinone, via FMN and iron-sulfur (Fe-S) centers, to quinones in the photosynthetic chain and possibly in a chloroplast respiratory chain. The immediate electron acceptor for the enzyme in this species is believed to be plastoquinone. Couples the redox reaction to proton translocation, and thus conserves the redox energy in a proton gradient. This chain is NAD(P)H-quinone oxidoreductase subunit J, chloroplastic, found in Daucus carota (Wild carrot).